We begin with the raw amino-acid sequence, 211 residues long: Uridine kinase (211 aa).

12 to 19 (GGSGSGKT) provides a ligand contact to ATP.

Belongs to the uridine kinase family.

The protein localises to the cytoplasm. It carries out the reaction uridine + ATP = UMP + ADP + H(+). It catalyses the reaction cytidine + ATP = CMP + ADP + H(+). Its pathway is pyrimidine metabolism; CTP biosynthesis via salvage pathway; CTP from cytidine: step 1/3. The protein operates within pyrimidine metabolism; UMP biosynthesis via salvage pathway; UMP from uridine: step 1/1. The sequence is that of Uridine kinase from Bacillus licheniformis (strain ATCC 14580 / DSM 13 / JCM 2505 / CCUG 7422 / NBRC 12200 / NCIMB 9375 / NCTC 10341 / NRRL NRS-1264 / Gibson 46).